A 145-amino-acid polypeptide reads, in one-letter code: Putative antiporter subunit mnhG2 (145 aa).

3 helical membrane passes run 11–31 (IAAV…IGIV), 51–71 (VLLT…FFSV), and 72–92 (RLLL…HLVA).

Belongs to the CPA3 antiporters (TC 2.A.63) subunit G family. As to quaternary structure, may form a heterooligomeric complex that consists of seven subunits: mnhA2, mnhB2, mnhC2, mnhD2, mnhE2, mnhF2 and mnhG2.

The protein localises to the cell membrane. In Staphylococcus aureus (strain bovine RF122 / ET3-1), this protein is Putative antiporter subunit mnhG2 (mnhG2).